A 423-amino-acid polypeptide reads, in one-letter code: UPF0229 protein Pmen_4018 (423 aa).

Residues 65 to 108 form a disordered region; the sequence is HHGRGGKQTIVHPGNKEFTAGERIPRPQGGGGGRGSGKASNSGE.

It belongs to the UPF0229 family.

This Ectopseudomonas mendocina (strain ymp) (Pseudomonas mendocina) protein is UPF0229 protein Pmen_4018.